A 566-amino-acid chain; its full sequence is Endoglucanase B (566 aa).

Residues 1–30 (MKKRRSSKVILSLAIVVALLAAVEPNAALA) form the signal peptide. Catalysis depends on Glu-177, which acts as the Proton donor. The Nucleophile role is filled by Glu-299.

This sequence belongs to the glycosyl hydrolase 5 (cellulase A) family.

It carries out the reaction Endohydrolysis of (1-&gt;4)-beta-D-glucosidic linkages in cellulose, lichenin and cereal beta-D-glucans.. This Paenibacillus lautus (Bacillus lautus) protein is Endoglucanase B (celB).